Consider the following 184-residue polypeptide: Fe/S biogenesis protein NfuA (184 aa).

2 residues coordinate [4Fe-4S] cluster: cysteine 142 and cysteine 145.

This sequence belongs to the NfuA family. As to quaternary structure, homodimer. [4Fe-4S] cluster serves as cofactor.

Functionally, involved in iron-sulfur cluster biogenesis. Binds a 4Fe-4S cluster, can transfer this cluster to apoproteins, and thereby intervenes in the maturation of Fe/S proteins. Could also act as a scaffold/chaperone for damaged Fe/S proteins. This Wigglesworthia glossinidia brevipalpis protein is Fe/S biogenesis protein NfuA.